Reading from the N-terminus, the 222-residue chain is UPF0758 protein YicR (222 aa).

In terms of domain architecture, MPN spans 100–222 (PLLSPEMTRE…YVSFAERGWI (123 aa)). Histidine 171, histidine 173, and aspartate 184 together coordinate Zn(2+). Residues 171-184 (HNHPSGCAEPSKAD) carry the JAMM motif motif.

It belongs to the UPF0758 family. YicR subfamily.

The chain is UPF0758 protein YicR from Escherichia coli O9:H4 (strain HS).